The sequence spans 705 residues: Ribosomal RNA large subunit methyltransferase K/L (705 aa).

One can recognise a THUMP domain in the interval 43–154 (VVYRCCLWSR…GEKGILGFDL (112 aa)).

The protein belongs to the methyltransferase superfamily. RlmKL family.

Its subcellular location is the cytoplasm. The catalysed reaction is guanosine(2445) in 23S rRNA + S-adenosyl-L-methionine = N(2)-methylguanosine(2445) in 23S rRNA + S-adenosyl-L-homocysteine + H(+). The enzyme catalyses guanosine(2069) in 23S rRNA + S-adenosyl-L-methionine = N(2)-methylguanosine(2069) in 23S rRNA + S-adenosyl-L-homocysteine + H(+). Functionally, specifically methylates the guanine in position 2445 (m2G2445) and the guanine in position 2069 (m7G2069) of 23S rRNA. The protein is Ribosomal RNA large subunit methyltransferase K/L of Aliivibrio salmonicida (strain LFI1238) (Vibrio salmonicida (strain LFI1238)).